We begin with the raw amino-acid sequence, 198 residues long: Phosphoheptose isomerase (198 aa).

The region spanning 40–198 is the SIS domain; that stretch reads IIGALRGGHK…IEAALMQDAR (159 aa). 55-57 is a substrate binding site; the sequence is NGG. Zn(2+)-binding residues include H64 and E68. Substrate contacts are provided by residues E68, 97 to 98, 123 to 125, S128, and Q175; these read ND and STS. Zn(2+)-binding residues include Q175 and H183.

The protein belongs to the SIS family. GmhA subfamily. Homotetramer. The cofactor is Zn(2+).

It localises to the cytoplasm. It catalyses the reaction 2 D-sedoheptulose 7-phosphate = D-glycero-alpha-D-manno-heptose 7-phosphate + D-glycero-beta-D-manno-heptose 7-phosphate. Its pathway is carbohydrate biosynthesis; D-glycero-D-manno-heptose 7-phosphate biosynthesis; D-glycero-alpha-D-manno-heptose 7-phosphate and D-glycero-beta-D-manno-heptose 7-phosphate from sedoheptulose 7-phosphate: step 1/1. Its function is as follows. Catalyzes the isomerization of sedoheptulose 7-phosphate in D-glycero-D-manno-heptose 7-phosphate. This is Phosphoheptose isomerase from Bradyrhizobium sp. (strain ORS 278).